The sequence spans 443 residues: tRNA (guanine-N(7)-)-methyltransferase non-catalytic subunit TRM82 (443 aa).

Residues 67-93 are disordered; sequence ASKKLKTNDGEPVAQPKKQAKVPKPGP. 3 WD repeats span residues 97–137, 193–235, and 239–279; these read PVYQ…KDNI, GHVS…IVDK, and GHEE…LLFK.

The protein belongs to the WD repeat TRM82 family. In terms of assembly, forms a heterodimer with the catalytic subunit TRM8.

It localises to the nucleus. The protein operates within tRNA modification; N(7)-methylguanine-tRNA biosynthesis. Its function is as follows. Required for the formation of N(7)-methylguanine at position 46 (m7G46) in tRNA. In the complex, it is required to stabilize and induce conformational changes of the catalytic subunit. The sequence is that of tRNA (guanine-N(7)-)-methyltransferase non-catalytic subunit TRM82 from Kluyveromyces lactis (strain ATCC 8585 / CBS 2359 / DSM 70799 / NBRC 1267 / NRRL Y-1140 / WM37) (Yeast).